Consider the following 199-residue polypeptide: Chaperone protein TorD (199 aa).

This sequence belongs to the TorD/DmsD family. TorD subfamily.

Its subcellular location is the cytoplasm. Functionally, involved in the biogenesis of TorA. Acts on TorA before the insertion of the molybdenum cofactor and, as a result, probably favors a conformation of the apoenzyme that is competent for acquiring the cofactor. The sequence is that of Chaperone protein TorD from Escherichia coli O8 (strain IAI1).